A 187-amino-acid chain; its full sequence is Putative protein SSX8 (187 aa).

Disordered regions lie at residues 1–21 (MNGD…SEKR) and 109–187 (PKIM…EDDE). A KRAB-related domain is found at 20-83 (KRSKAFNDIA…KQATDFQGNY (64 aa)). Ser-123 carries the phosphoserine modification. Over residues 152–168 (KRSGPKRGRHAWTHRLR) the composition is skewed to basic residues.

It belongs to the SSX family. In terms of tissue distribution, not detected in any normal or tumor tissues.

Functionally, could act as a modulator of transcription. This is Putative protein SSX8 from Homo sapiens (Human).